We begin with the raw amino-acid sequence, 239 residues long: Ribonuclease PH (239 aa).

Phosphate-binding positions include R86 and 124 to 126 (GTR).

It belongs to the RNase PH family. As to quaternary structure, homohexameric ring arranged as a trimer of dimers.

It carries out the reaction tRNA(n+1) + phosphate = tRNA(n) + a ribonucleoside 5'-diphosphate. In terms of biological role, phosphorolytic 3'-5' exoribonuclease that plays an important role in tRNA 3'-end maturation. Removes nucleotide residues following the 3'-CCA terminus of tRNAs; can also add nucleotides to the ends of RNA molecules by using nucleoside diphosphates as substrates, but this may not be physiologically important. Probably plays a role in initiation of 16S rRNA degradation (leading to ribosome degradation) during starvation. The sequence is that of Ribonuclease PH from Anaeromyxobacter dehalogenans (strain 2CP-C).